A 203-amino-acid chain; its full sequence is E3 ubiquitin-protein ligase RNF152 (203 aa).

The RING-type zinc-finger motif lies at Cys-12–Arg-55. Positions Ile-106–Thr-165 are necessary for interaction with RRAGA. Residues Ser-167–Leu-187 form a helical membrane-spanning segment.

Belongs to the RNF152 family. Interacts with RRAGA (inactive GDP-bound form); stimulated by amino acid starvation. Interacts with SEC16A. Ubiquitinated. Autoubiquitinated in vitro, leading to its degradation by the proteasome. Widely expressed.

The protein resides in the lysosome membrane. It catalyses the reaction S-ubiquitinyl-[E2 ubiquitin-conjugating enzyme]-L-cysteine + [acceptor protein]-L-lysine = [E2 ubiquitin-conjugating enzyme]-L-cysteine + N(6)-ubiquitinyl-[acceptor protein]-L-lysine.. It participates in protein modification; protein ubiquitination. E3 ubiquitin-protein ligase that acts as a negative regulator of mTORC1 signaling by mediating ubiquitination of RagA/RRAGA and RHEB. Catalyzes 'Lys-63'-linked polyubiquitination of RagA/RRAGA in response to amino acid starvation, thereby regulating mTORC1 signaling. Also mediates monoubiquitination of RHEB, promoting its association with the TSC-TBC complex and subsequent inhibition. Also mediates 'Lys-48'-linked polyubiquitination of target proteins and their subsequent targeting to the proteasome for degradation. Induces apoptosis when overexpressed. This is E3 ubiquitin-protein ligase RNF152 from Homo sapiens (Human).